Reading from the N-terminus, the 480-residue chain is Serine/threonine-protein kinase WAG2 (480 aa).

One can recognise a Protein kinase domain in the interval leucine 88–phenylalanine 396. ATP contacts are provided by residues leucine 94–valine 102 and lysine 117. The Proton acceptor role is filled by aspartate 213.

Belongs to the protein kinase superfamily. Ser/Thr protein kinase family. In terms of tissue distribution, expressed in root tips, lateral root primordia and emerging true leaf primordia.

It localises to the cytoplasm. Its subcellular location is the cytosol. The catalysed reaction is L-seryl-[protein] + ATP = O-phospho-L-seryl-[protein] + ADP + H(+). It carries out the reaction L-threonyl-[protein] + ATP = O-phospho-L-threonyl-[protein] + ADP + H(+). Its function is as follows. Serine/threonine-protein kinase involved in the regulation of auxin signaling. Acts as a positive regulator of cellular auxin efflux and regulates organ development by enhancing PIN-mediated polar auxin transport. Phosphorylates conserved serine residues in the PIN auxin efflux carriers. Phosphorylation of PIN proteins is required and sufficient for apical-basal PIN polarity that enables directional intercellular auxin fluxes, which mediate differential growth, tissue patterning and organogenesis. Acts as a suppressor of root waving. This Arabidopsis thaliana (Mouse-ear cress) protein is Serine/threonine-protein kinase WAG2 (WAG2).